The sequence spans 89 residues: Large ribosomal subunit protein bL27 (89 aa).

The interval 1 to 21 (MAHKKAGGSSRNGRDSAGRRL) is disordered.

It belongs to the bacterial ribosomal protein bL27 family.

This is Large ribosomal subunit protein bL27 from Roseobacter denitrificans (strain ATCC 33942 / OCh 114) (Erythrobacter sp. (strain OCh 114)).